The primary structure comprises 319 residues: Ribosomal RNA large subunit methyltransferase F (319 aa).

The protein belongs to the methyltransferase superfamily. METTL16/RlmF family.

The protein resides in the cytoplasm. It catalyses the reaction adenosine(1618) in 23S rRNA + S-adenosyl-L-methionine = N(6)-methyladenosine(1618) in 23S rRNA + S-adenosyl-L-homocysteine + H(+). Specifically methylates the adenine in position 1618 of 23S rRNA. This Aliivibrio fischeri (strain ATCC 700601 / ES114) (Vibrio fischeri) protein is Ribosomal RNA large subunit methyltransferase F.